A 418-amino-acid chain; its full sequence is MERLLIRGGRRLEGEIRISGAKNAALPIMAATLLADGPMTVGNIPHLHDITTTMELLGRMGVGLTVDERMRVEADPRSLHSCHAPYELVKTMRASILVLGPLLARYGEAQVSLPGGCAIGSRPVNLHVEGLRAMGAELTVEEGYIKARCDRLRGARIVLELVTVTGTENLMMAAALAEGTTVIENAAREPEVVDLADCLNAMGAKIQGAGTDTLTIEGVERLNGIHYDVLPDRIESGTYLIAAAITGGRIKLKDTAPKLLDAVLVKLEEAGARIETGPDWISLEMEGRPRSVSVRTAPYPGFPTDMQAQFCALDCIAEGTGTITETVFENRFMHCLEMQRMGADIRIEGNTAILRGVPALKGAPVMATDLRASASLVLAGLVARGETRVDRIYHIDRGYECIEEKLAQLGADIRRVPA.

Residue 22–23 (KN) participates in phosphoenolpyruvate binding. A UDP-N-acetyl-alpha-D-glucosamine-binding site is contributed by Arg-93. Catalysis depends on Cys-117, which acts as the Proton donor. Cys-117 carries the post-translational modification 2-(S-cysteinyl)pyruvic acid O-phosphothioketal. UDP-N-acetyl-alpha-D-glucosamine is bound by residues Asp-305 and Val-327.

Belongs to the EPSP synthase family. MurA subfamily.

It localises to the cytoplasm. It carries out the reaction phosphoenolpyruvate + UDP-N-acetyl-alpha-D-glucosamine = UDP-N-acetyl-3-O-(1-carboxyvinyl)-alpha-D-glucosamine + phosphate. The protein operates within cell wall biogenesis; peptidoglycan biosynthesis. Its function is as follows. Cell wall formation. Adds enolpyruvyl to UDP-N-acetylglucosamine. In Alkalilimnicola ehrlichii (strain ATCC BAA-1101 / DSM 17681 / MLHE-1), this protein is UDP-N-acetylglucosamine 1-carboxyvinyltransferase.